The primary structure comprises 168 residues: Phospholipase A and acyltransferase 1 (168 aa).

Residues Met-1 to Arg-138 are Cytoplasmic-facing. Positions Leu-20–Gln-135 constitute an LRAT domain. His-30 is a catalytic residue. The active-site Acyl-thioester intermediate is Cys-119. The chain crosses the membrane as a helical span at residues Ala-139–Phe-159. At Pro-160–Tyr-168 the chain is on the lumenal side.

This sequence belongs to the H-rev107 family. As to expression, abundantly expressed in testis, skeletal muscle, brain, and heart. Highly expressed in the testis, skeletal muscle, brain, heart, and thyroid.

The protein resides in the membrane. Its subcellular location is the cytoplasm. It is found in the nucleus. It carries out the reaction a 1,2-diacyl-sn-glycero-3-phosphocholine + H2O = a 1-acyl-sn-glycero-3-phosphocholine + a fatty acid + H(+). It catalyses the reaction a 1,2-diacyl-sn-glycero-3-phosphocholine + H2O = a 2-acyl-sn-glycero-3-phosphocholine + a fatty acid + H(+). The catalysed reaction is 1,2-dihexadecanoyl-sn-glycero-3-phosphocholine + H2O = 2-hexadecanoyl-sn-glycero-3-phosphocholine + hexadecanoate + H(+). The enzyme catalyses 1,2-dihexadecanoyl-sn-glycero-3-phosphocholine + H2O = 1-hexadecanoyl-sn-glycero-3-phosphocholine + hexadecanoate + H(+). It carries out the reaction 1-hexadecanoyl-2-(5Z,8Z,11Z,14Z-eicosatetraenoyl)-sn-glycero-3-phosphoethanolamine + H2O = 2-(5Z,8Z,11Z,14Z)-eicosatetraenoyl-sn-glycero-3-phosphoethanolamine + hexadecanoate + H(+). It catalyses the reaction 1-hexadecanoyl-2-(5Z,8Z,11Z,14Z-eicosatetraenoyl)-sn-glycero-3-phosphoethanolamine + H2O = 1-hexadecanoyl-sn-glycero-3-phosphoethanolamine + (5Z,8Z,11Z,14Z)-eicosatetraenoate + H(+). The catalysed reaction is 1,2-di-(9Z-octadecenoyl)-sn-glycero-3-phosphoethanolamine + 1,2-dihexadecanoyl-sn-glycero-3-phosphocholine = hexadecanoyl-sn-glycero-3-phosphocholine + N-hexadecanoyl-1,2-di-(9Z-octadecenoyl)-sn-glycero-3-phosphoethanolamine + H(+). The enzyme catalyses 1,2-dihexadecanoyl-sn-glycero-3-phosphocholine + a 2-acyl-sn-glycero-3-phosphocholine = a 1-hexadecanoyl-2-acyl-sn-glycero-3-phosphocholine + 2-hexadecanoyl-sn-glycero-3-phosphocholine. Its function is as follows. Exhibits both phospholipase A1/2 and acyltransferase activities. Shows phospholipase A1 (PLA1) and A2 (PLA2) activity, catalyzing the calcium-independent release of fatty acids from the sn-1 or sn-2 position of glycerophospholipids. Shows O-acyltransferase activity, catalyzing the transfer of a fatty acyl group from glycerophospholipid to the hydroxyl group of lysophospholipid. Shows N-acyltransferase activity, catalyzing the calcium-independent transfer of a fatty acyl group at the sn-1 position of phosphatidylcholine (PC) and other glycerophospholipids to the primary amine of phosphatidylethanolamine (PE), forming N-acylphosphatidylethanolamine (NAPE) which serves as precursor for N-acylethanolamines (NAEs). The polypeptide is Phospholipase A and acyltransferase 1 (Homo sapiens (Human)).